Here is a 175-residue protein sequence, read N- to C-terminus: Co-chaperone protein HscB homolog (175 aa).

Residues 8–80 (DFFSLFGLPR…LNRARYLLQL (73 aa)) form the J domain.

It belongs to the HscB family. In terms of assembly, interacts with HscA and stimulates its ATPase activity.

In terms of biological role, co-chaperone involved in the maturation of iron-sulfur cluster-containing proteins. Seems to help targeting proteins to be folded toward HscA. This is Co-chaperone protein HscB homolog from Chromobacterium violaceum (strain ATCC 12472 / DSM 30191 / JCM 1249 / CCUG 213 / NBRC 12614 / NCIMB 9131 / NCTC 9757 / MK).